Here is a 189-residue protein sequence, read N- to C-terminus: MTKLPYALLDKGSLLVASPDVNGGIFSRSVVLVCEHSLNGSFGLILNKILEIDLPEEIFPLDHFDESKVRFCMGGPLQANQIMLLHTSPDSANSSIEICPSVFLGGDFSFAGEKEGRTRDDKMLLCFGYSGWQGGQLEKEFLEGLWFLAPSSQEIIFTDAPERMWSDVLQHLGGRFASLSTIPENLLLN.

Belongs to the UPF0301 (AlgH) family.

The polypeptide is UPF0301 protein CTA_0231 (Chlamydia trachomatis serovar A (strain ATCC VR-571B / DSM 19440 / HAR-13)).